We begin with the raw amino-acid sequence, 174 residues long: Guided entry of tail-anchored proteins factor 1 (174 aa).

Over 1 to 8 (MSSAAADH) the chain is Lumenal. Residues 9–29 (WAWLLVLSFVFGCNVLRILLP) traverse the membrane as a helical segment. The Cytoplasmic segment spans residues 30 to 99 (SFSSFMSRVL…VKARTAQLAK (70 aa)). Residues 39 to 94 (LQKDAEQESQMRAEIQDMKQELSTVNMMDEFARYARLERKINKMTDKLKTHVKART) adopt a coiled-coil conformation. An interaction with GET3/TRC40 region spans residues 39–97 (LQKDAEQESQMRAEIQDMKQELSTVNMMDEFARYARLERKINKMTDKLKTHVKARTAQL). A helical transmembrane segment spans residues 100-120 (IKWVISVAFYVLQAALMISLI). Topologically, residues 121-148 (WKYYSVPVAVVPSKWITPLDRLVAFPTR) are lumenal. Residues 149 to 169 (VAGGVGITCWILVCNKVVAIV) form a helical membrane-spanning segment. At 170–174 (LHPFS) the chain is on the cytoplasmic side.

It belongs to the WRB/GET1 family. As to quaternary structure, component of the Golgi to ER traffic (GET) complex, which is composed of GET1/WRB, CAMLG/GET2 and GET3/TRC40. Within the complex, GET1 and CAMLG form a heterotetramer which is stabilized by phosphatidylinositol binding and which binds to the GET3 homodimer. Interacts with CAMLG (via C-terminus). GET3 shows a higher affinity for CAMLG than for GET1.

It localises to the endoplasmic reticulum membrane. Required for the post-translational delivery of tail-anchored (TA) proteins to the endoplasmic reticulum (ER). Together with CAMLG/GET2, acts as a membrane receptor for soluble GET3/TRC40, which recognizes and selectively binds the transmembrane domain of TA proteins in the cytosol. Required to ensure correct topology and ER insertion of CAMLG. The polypeptide is Guided entry of tail-anchored proteins factor 1 (Homo sapiens (Human)).